A 499-amino-acid polypeptide reads, in one-letter code: Serine/threonine-protein phosphatase 5 (499 aa).

A disordered region spans residues 1-23 (MAMAEGERTECAEPPRDEPPAEG). Alanine 2 is subject to N-acetylalanine. TPR repeat units follow at residues 28–61 (AEEL…NPSN), 62–95 (AIYY…DKKY), and 96–129 (IKGY…KPND). A catalytic region spans residues 200 to 499 (DQKKLHRKCA…ANTLLQLGMM (300 aa)). 3 residues coordinate Mg(2+): aspartate 242, histidine 244, and aspartate 271. Histidine 244 serves as a coordination point for substrate. Substrate contacts are provided by residues arginine 275 and 303–304 (NH). Mg(2+) is bound at residue asparagine 303. The active-site Proton donor/acceptor is the histidine 304. Histidine 352 contributes to the Mg(2+) binding site. Substrate contacts are provided by arginine 400 and histidine 427. A Mg(2+)-binding site is contributed by histidine 427. Positions 495-499 (QLGMM) are required for autoinhibition.

It belongs to the PPP phosphatase family. PP-5 (PP-T) subfamily. As to quaternary structure, probably forms a complex composed of chaperones HSP90 and HSP70, co-chaperones STIP1/HOP, CDC37, PPP5C, PTGES3/p23, TSC1 and client protein TSC2. Probably forms a complex composed of chaperones HSP90 and HSP70, co-chaperones CDC37, PPP5C, TSC1 and client protein TSC2, CDK4, AKT, RAF1 and NR3C1; this complex does not contain co-chaperones STIP1/HOP and PTGES3/p23. Part of a complex with HSP90/HSP90AA1 and steroid receptors. Interacts (via TPR repeats) with HSP90AA1 (via TPR repeat-binding motif) or HSPA1A/HSPA1B; the interaction is direct and activates the phosphatase activity. Dissociates from HSPA1A/HSPA1B and HSP90AA1 in response to arachidonic acid. Interacts with CPNE1 (via VWFA domain). Interacts with CDC16, CDC27. Interacts with KLHDC10 (via the 6 Kelch repeats); inhibits the phosphatase activity on MAP3K5. Interacts with ATM and ATR; both interactions are induced by DNA damage and enhance ATM and ATR kinase activity. Interacts with RAD17; reduced by DNA damage. Interacts with nuclear receptors such as NR3C1/GCR and PPARG (activated by agonist); regulates their transactivation activities. Interacts (via TPR repeats) with S100 proteins S100A1, S100A2, S100A6, S100B and S100P; the interactions are calcium-dependent, strongly activate PPP5C phosphatase activity and compete with HSP90AA1 and MAP3K5 interactions. Interacts with SMAD2 and SMAD3 but not with SMAD1; decreases SMAD3 phosphorylation and protein levels. Interacts (via TPR repeats) with CRY1 and CRY2; the interaction with CRY2 down-regulates the phosphatase activity on CSNK1E. Interacts (via TPR repeats) with the active form of RAC1, GNA12 or GNA13; these interactions activate the phosphatase activity and translocate PPP5C to the cell membrane. Interacts with FLCN. Mg(2+) is required as a cofactor. Mn(2+) serves as cofactor. Post-translationally, activated by at least two different proteolytic cleavages producing a 56 kDa and a 50 kDa form. In terms of tissue distribution, predominantly found in brain and, in lower levels, in testis, but was nearly undetectable in spleen, lung, skeletal muscle, kidney and liver.

The protein localises to the nucleus. Its subcellular location is the cytoplasm. It is found in the cell membrane. It catalyses the reaction O-phospho-L-seryl-[protein] + H2O = L-seryl-[protein] + phosphate. It carries out the reaction O-phospho-L-threonyl-[protein] + H2O = L-threonyl-[protein] + phosphate. With respect to regulation, autoinhibited. In the autoinhibited state, the TPR domain interacts with the catalytic region and prevents substrate access to the catalytic pocket. Allosterically activated by various polyunsaturated fatty acids, free long-chain fatty-acids and long-chain fatty acyl-CoA esters, arachidonic acid being the most effective activator. HSP90A and probably RAC1, GNA12 and GNA13 can also release the autoinhibition by the TPR repeat. Activation by RAC1, GNA12 and GNA13 is synergistic with the one produced by fatty acids binding. Inhibited by okadaic acid. In terms of biological role, serine/threonine-protein phosphatase that dephosphorylates a myriad of proteins involved in different signaling pathways including the kinases CSNK1E, ASK1/MAP3K5, PRKDC and RAF1, the nuclear receptors NR3C1, PPARG, ESR1 and ESR2, SMAD proteins and TAU/MAPT. Implicated in wide ranging cellular processes, including apoptosis, differentiation, DNA damage response, cell survival, regulation of ion channels or circadian rhythms, in response to steroid and thyroid hormones, calcium, fatty acids, TGF-beta as well as oxidative and genotoxic stresses. Participates in the control of DNA damage response mechanisms such as checkpoint activation and DNA damage repair through, for instance, the regulation ATM/ATR-signaling and dephosphorylation of PRKDC and TP53BP1. Inhibits ASK1/MAP3K5-mediated apoptosis induced by oxidative stress. Plays a positive role in adipogenesis, mainly through the dephosphorylation and activation of PPARG transactivation function. Also dephosphorylates and inhibits the anti-adipogenic effect of NR3C1. Regulates the circadian rhythms, through the dephosphorylation and activation of CSNK1E. May modulate TGF-beta signaling pathway by the regulation of SMAD3 phosphorylation and protein expression levels. Dephosphorylates and may play a role in the regulation of TAU/MAPT. Through their dephosphorylation, may play a role in the regulation of ions channels such as KCNH2. Dephosphorylate FNIP1, disrupting interaction with HSP90AA1/Hsp90. In Rattus norvegicus (Rat), this protein is Serine/threonine-protein phosphatase 5 (Ppp5c).